The sequence spans 808 residues: N-terminal kinase-like protein (808 aa).

The Protein kinase domain occupies 14–314; sequence FELIPEPPEG…PEDFCRHKVL (301 aa). HEAT repeat units follow at residues 350–388, 389–427, and 507–545; these read IIPV…VNTQ, IFPH…LNVE, and ILPV…EDPT. Disordered regions lie at residues 540–566, 587–646, and 658–808; these read VSED…GGAA, SHPT…RWDD, and SVLA…RKLD. Residues 556–566 show a composition bias toward low complexity; sequence AASSPGMGGAA. Polar residues predominate over residues 587 to 600; that stretch reads SHPTTAPTETNIPQ. Over residues 601–617 the composition is skewed to pro residues; sequence RPTPEGVPAPAPTPVPA. Polar residues predominate over residues 660–680; it reads LAQQDDWSTGGQVSRASQVSN. A compositionally biased stretch (basic and acidic residues) spans 681 to 690; the sequence is SDHKSSKSPE. At serine 754 the chain carries Phosphoserine. A compositionally biased stretch (acidic residues) spans 755 to 764; the sequence is WGEDNWEGLE. Positions 761-797 form a coiled coil; the sequence is EGLETDSRQVKAELARKKREERRREMEAKRAERKVAK. Basic and acidic residues-rich tracts occupy residues 765–775 and 782–795; these read TDSRQVKAELA and RRRE…ERKV. Residues 793–808 form an interaction with COPB1 region; sequence RKVAKGPMKLGARKLD.

It belongs to the protein kinase superfamily. As to quaternary structure, interacts with GORAB. Interacts with COPA, COPB1 and COPB2. Homooligomer. Interacts with AP2B1. As to expression, ubiquitous.

It localises to the cytoplasm. Its subcellular location is the cytoskeleton. The protein localises to the microtubule organizing center. It is found in the centrosome. The protein resides in the endoplasmic reticulum-Golgi intermediate compartment. It localises to the golgi apparatus. Its subcellular location is the cis-Golgi network. The protein localises to the nucleus. Its function is as follows. Regulates COPI-mediated retrograde protein traffic at the interface between the Golgi apparatus and the endoplasmic reticulum. Involved in the maintenance of the Golgi apparatus morphology. Functionally, acts as a transcriptional activator. It binds to three different types of GC-rich DNA binding sites (box-A, -B and -C) in the beta-polymerase promoter region. It also binds to the TERT promoter region. In Homo sapiens (Human), this protein is N-terminal kinase-like protein (SCYL1).